The primary structure comprises 176 residues: Large ribosomal subunit protein uL6 (176 aa).

This sequence belongs to the universal ribosomal protein uL6 family. Part of the 50S ribosomal subunit.

In terms of biological role, this protein binds to the 23S rRNA, and is important in its secondary structure. It is located near the subunit interface in the base of the L7/L12 stalk, and near the tRNA binding site of the peptidyltransferase center. The chain is Large ribosomal subunit protein uL6 from Burkholderia mallei (strain NCTC 10247).